Reading from the N-terminus, the 248-residue chain is Protein maestro (248 aa).

The interval 1–20 (MDQRQRRILGQPLSIPTSQP) is disordered. HEAT repeat units lie at residues 44–79 (EPLKNVLFILAERARDPNANKRHTAMRGLGTMAREA) and 128–163 (SFFIDITLQTRTLLDDENDSLRYSAFVLFGQLAAFA).

The protein localises to the nucleus. Its subcellular location is the nucleolus. This Macaca fascicularis (Crab-eating macaque) protein is Protein maestro (MRO).